Here is a 694-residue protein sequence, read N- to C-terminus: DNA primase (694 aa).

Residues 41 to 65 (CPFHDDKSPSFTVSPAKQFYYCFSC) form a CHC2-type zinc finger. Residues 265-348 (DQAVVVEGYF…QGQVQLRVLN (84 aa)) enclose the Toprim domain. 3 residues coordinate Mg(2+): Glu-271, Asp-317, and Asp-319.

Belongs to the DnaG primase family. Monomer. Interacts with DnaB. Requires Zn(2+) as cofactor. It depends on Mg(2+) as a cofactor.

The catalysed reaction is ssDNA + n NTP = ssDNA/pppN(pN)n-1 hybrid + (n-1) diphosphate.. RNA polymerase that catalyzes the synthesis of short RNA molecules used as primers for DNA polymerase during DNA replication. This Synechococcus elongatus (strain ATCC 33912 / PCC 7942 / FACHB-805) (Anacystis nidulans R2) protein is DNA primase.